Reading from the N-terminus, the 365-residue chain is DNA replication and repair protein RecF (365 aa).

30–37 provides a ligand contact to ATP; sequence GDNGEGKT.

This sequence belongs to the RecF family.

The protein localises to the cytoplasm. Its function is as follows. The RecF protein is involved in DNA metabolism; it is required for DNA replication and normal SOS inducibility. RecF binds preferentially to single-stranded, linear DNA. It also seems to bind ATP. The sequence is that of DNA replication and repair protein RecF from Leptospira borgpetersenii serovar Hardjo-bovis (strain JB197).